We begin with the raw amino-acid sequence, 76 residues long: Glutathione S-transferase (76 aa).

One can recognise a GST N-terminal domain in the interval 1 to 40; the sequence is XVAFETVPVDLMKGEHKQPAYLALQPFGTVPAVVDGDYXL. A GST C-terminal domain is found at 41 to 76; it reads LSAVLDVYEAHLHGYLAGDFVSLADLAHLPFTDYLV.

Belongs to the GST superfamily. Theta family.

The protein resides in the cytoplasm. It carries out the reaction RX + glutathione = an S-substituted glutathione + a halide anion + H(+). Functionally, conjugation of reduced glutathione to a wide number of exogenous and endogenous hydrophobic electrophiles. The protein is Glutathione S-transferase of Brassica oleracea var. italica (Broccoli).